A 316-amino-acid polypeptide reads, in one-letter code: Homoserine kinase (316 aa).

Residue 97 to 107 participates in ATP binding; sequence PPARGLGSSAS.

Belongs to the GHMP kinase family. Homoserine kinase subfamily.

The protein localises to the cytoplasm. The enzyme catalyses L-homoserine + ATP = O-phospho-L-homoserine + ADP + H(+). Its pathway is amino-acid biosynthesis; L-threonine biosynthesis; L-threonine from L-aspartate: step 4/5. In terms of biological role, catalyzes the ATP-dependent phosphorylation of L-homoserine to L-homoserine phosphate. The chain is Homoserine kinase from Prochlorococcus marinus (strain MIT 9303).